A 194-amino-acid polypeptide reads, in one-letter code: Molybdenum cofactor guanylyltransferase (194 aa).

GTP contacts are provided by residues 12–14 (LAG), Lys-25, Asn-53, Asp-70, and Asp-100. A Mg(2+)-binding site is contributed by Asp-100.

This sequence belongs to the MobA family. As to quaternary structure, monomer. Requires Mg(2+) as cofactor.

It localises to the cytoplasm. The enzyme catalyses Mo-molybdopterin + GTP + H(+) = Mo-molybdopterin guanine dinucleotide + diphosphate. In terms of biological role, transfers a GMP moiety from GTP to Mo-molybdopterin (Mo-MPT) cofactor (Moco or molybdenum cofactor) to form Mo-molybdopterin guanine dinucleotide (Mo-MGD) cofactor. The sequence is that of Molybdenum cofactor guanylyltransferase from Vibrio atlanticus (strain LGP32) (Vibrio splendidus (strain Mel32)).